Reading from the N-terminus, the 324-residue chain is Beta-ketoacyl-[acyl-carrier-protein] synthase III (324 aa).

Catalysis depends on residues Cys112 and His249. Positions 250–254 (QANDR) are ACP-binding. Residue Asn279 is part of the active site.

It belongs to the thiolase-like superfamily. FabH family. Homodimer.

The protein resides in the cytoplasm. It catalyses the reaction malonyl-[ACP] + acetyl-CoA + H(+) = 3-oxobutanoyl-[ACP] + CO2 + CoA. The protein operates within lipid metabolism; fatty acid biosynthesis. Catalyzes the condensation reaction of fatty acid synthesis by the addition to an acyl acceptor of two carbons from malonyl-ACP. Catalyzes the first condensation reaction which initiates fatty acid synthesis and may therefore play a role in governing the total rate of fatty acid production. Possesses both acetoacetyl-ACP synthase and acetyl transacylase activities. Its substrate specificity determines the biosynthesis of branched-chain and/or straight-chain of fatty acids. In Streptococcus gordonii (strain Challis / ATCC 35105 / BCRC 15272 / CH1 / DL1 / V288), this protein is Beta-ketoacyl-[acyl-carrier-protein] synthase III.